The sequence spans 893 residues: Nitrate reductase [NADPH] (893 aa).

Positions 1 to 83 (MSVTTQQPAV…KPTPDAHVPR (83 aa)) are disordered. Residues 55–65 (PDFPLPPPANP) show a composition bias toward pro residues. Residues 71–83 (DIDKPTPDAHVPR) show a composition bias toward basic and acidic residues. Position 170 (C170) interacts with Mo-molybdopterin. Residues 536-611 (NRIVELDELK…MPAYHIGTLS (76 aa)) enclose the Cytochrome b5 heme-binding domain. H571 and H594 together coordinate heme. An FAD-binding FR-type domain is found at 641 to 752 (RTWSKALLSS…KGPIGKFEYL (112 aa)). Residues 695–698 (RSYT), 712–716 (LIKIY), 726–728 (KMT), S776, and T779 each bind FAD. Residue 863-872 (LVLVCGPEGL) coordinates NADP(+).

This sequence belongs to the nitrate reductase family. Homodimer. FAD serves as cofactor. It depends on heme as a cofactor. Mo-molybdopterin is required as a cofactor.

The enzyme catalyses nitrite + NADP(+) + H2O = nitrate + NADPH + H(+). Nitrate reductase is a key enzyme involved in the first step of nitrate assimilation in plants, fungi and bacteria. The sequence is that of Nitrate reductase [NADPH] (NIAD) from Leptosphaeria maculans (Blackleg fungus).